A 172-amino-acid polypeptide reads, in one-letter code: 3-hydroxydecanoyl-[acyl-carrier-protein] dehydratase (172 aa).

His-70 is an active-site residue.

Belongs to the thioester dehydratase family. FabA subfamily. In terms of assembly, homodimer.

Its subcellular location is the cytoplasm. The catalysed reaction is a (3R)-hydroxyacyl-[ACP] = a (2E)-enoyl-[ACP] + H2O. It carries out the reaction (3R)-hydroxydecanoyl-[ACP] = (2E)-decenoyl-[ACP] + H2O. It catalyses the reaction (2E)-decenoyl-[ACP] = (3Z)-decenoyl-[ACP]. It functions in the pathway lipid metabolism; fatty acid biosynthesis. In terms of biological role, necessary for the introduction of cis unsaturation into fatty acids. Catalyzes the dehydration of (3R)-3-hydroxydecanoyl-ACP to E-(2)-decenoyl-ACP and then its isomerization to Z-(3)-decenoyl-ACP. Can catalyze the dehydratase reaction for beta-hydroxyacyl-ACPs with saturated chain lengths up to 16:0, being most active on intermediate chain length. The polypeptide is 3-hydroxydecanoyl-[acyl-carrier-protein] dehydratase (Xylella fastidiosa (strain M23)).